Reading from the N-terminus, the 369-residue chain is Probable trehalose-phosphate phosphatase D (369 aa).

The interval 63–85 is disordered; the sequence is RASSPTRTRPGNISPLPESDEED.

It belongs to the trehalose phosphatase family. It depends on a divalent metal cation as a cofactor.

It carries out the reaction alpha,alpha-trehalose 6-phosphate + H2O = alpha,alpha-trehalose + phosphate. It functions in the pathway glycan biosynthesis; trehalose biosynthesis. Its function is as follows. Removes the phosphate from trehalose 6-phosphate to produce free trehalose. Trehalose accumulation in plant may improve abiotic stress tolerance. The sequence is that of Probable trehalose-phosphate phosphatase D (TPPD) from Arabidopsis thaliana (Mouse-ear cress).